The sequence spans 106 residues: uncharacterized protein (106 aa).

This sequence belongs to the HesB/IscA family.

This is an uncharacterized protein from Cereibacter sphaeroides (Rhodobacter sphaeroides).